The following is a 356-amino-acid chain: HTH-type transcriptional regulator AglR (356 aa).

An HTH lacI-type domain is found at 1–57; the sequence is MPVNLKQLAELLGLSQTTVSRALNGYPEVNAETRARVLEAVRETGYRPNRAAQRLAT. A DNA-binding region (H-T-H motif) is located at residues 5–24; that stretch reads LKQLAELLGLSQTTVSRALN. The interval 337–356 is disordered; the sequence is TGPAPDRSPLPNPSPQVGGA.

Functionally, probable regulatory protein for the binding-protein-dependent transport system for alpha-glucosides such as sucrose, maltose and trehalose. The polypeptide is HTH-type transcriptional regulator AglR (aglR) (Rhizobium meliloti (strain 1021) (Ensifer meliloti)).